Here is a 212-residue protein sequence, read N- to C-terminus: Proteasome subunit beta 2 (212 aa).

Residues 1–15 (MLHHPGTGQLRALKG) constitute a propeptide, removed in mature form; by autocatalysis. Thr16 (nucleophile) is an active-site residue.

The protein belongs to the peptidase T1B family. In terms of assembly, the 20S proteasome core is composed of 14 alpha and 14 beta subunits that assemble into four stacked heptameric rings, resulting in a barrel-shaped structure. The two inner rings, each composed of seven catalytic beta subunits, are sandwiched by two outer rings, each composed of seven alpha subunits. The catalytic chamber with the active sites is on the inside of the barrel. Has a gated structure, the ends of the cylinder being occluded by the N-termini of the alpha-subunits. Is capped at one or both ends by the proteasome regulatory ATPase, PAN.

The protein resides in the cytoplasm. It carries out the reaction Cleavage of peptide bonds with very broad specificity.. Its activity is regulated as follows. The formation of the proteasomal ATPase PAN-20S proteasome complex, via the docking of the C-termini of PAN into the intersubunit pockets in the alpha-rings, triggers opening of the gate for substrate entry. Interconversion between the open-gate and close-gate conformations leads to a dynamic regulation of the 20S proteasome proteolysis activity. Functionally, component of the proteasome core, a large protease complex with broad specificity involved in protein degradation. The polypeptide is Proteasome subunit beta 2 (Hyperthermus butylicus (strain DSM 5456 / JCM 9403 / PLM1-5)).